The primary structure comprises 365 residues: 4-hydroxy-tetrahydrodipicolinate synthase 1, chloroplastic (365 aa).

A chloroplast-targeting transit peptide spans 1–39; the sequence is MSALKNYGLISIDSALHFPRSNQLQSYKRRNAKWVSPIA. Threonine 108 contacts pyruvate. Residue tyrosine 194 is the Proton donor/acceptor of the active site. Lysine 222 (schiff-base intermediate with substrate) is an active-site residue. Residue isoleucine 261 participates in pyruvate binding.

It belongs to the DapA family.

It localises to the plastid. Its subcellular location is the chloroplast. The catalysed reaction is L-aspartate 4-semialdehyde + pyruvate = (2S,4S)-4-hydroxy-2,3,4,5-tetrahydrodipicolinate + H2O + H(+). Its pathway is amino-acid biosynthesis; L-lysine biosynthesis via DAP pathway; (S)-tetrahydrodipicolinate from L-aspartate: step 3/4. Catalyzes the condensation of (S)-aspartate-beta-semialdehyde [(S)-ASA] and pyruvate to 4-hydroxy-tetrahydrodipicolinate (HTPA). The sequence is that of 4-hydroxy-tetrahydrodipicolinate synthase 1, chloroplastic (DHDPS1) from Arabidopsis thaliana (Mouse-ear cress).